Reading from the N-terminus, the 399-residue chain is Probable peptidoglycan glycosyltransferase FtsW (399 aa).

A run of 9 helical transmembrane segments spans residues Pro-19 to Ser-39, Ile-61 to Trp-81, Ser-85 to Gly-105, Trp-114 to Ala-134, Val-160 to Leu-180, Phe-198 to Tyr-218, Leu-285 to Ile-305, Met-314 to Ile-334, and Leu-350 to Ile-370.

This sequence belongs to the SEDS family. FtsW subfamily.

It is found in the cell inner membrane. The enzyme catalyses [GlcNAc-(1-&gt;4)-Mur2Ac(oyl-L-Ala-gamma-D-Glu-L-Lys-D-Ala-D-Ala)](n)-di-trans,octa-cis-undecaprenyl diphosphate + beta-D-GlcNAc-(1-&gt;4)-Mur2Ac(oyl-L-Ala-gamma-D-Glu-L-Lys-D-Ala-D-Ala)-di-trans,octa-cis-undecaprenyl diphosphate = [GlcNAc-(1-&gt;4)-Mur2Ac(oyl-L-Ala-gamma-D-Glu-L-Lys-D-Ala-D-Ala)](n+1)-di-trans,octa-cis-undecaprenyl diphosphate + di-trans,octa-cis-undecaprenyl diphosphate + H(+). The protein operates within cell wall biogenesis; peptidoglycan biosynthesis. Peptidoglycan polymerase that is essential for cell division. This chain is Probable peptidoglycan glycosyltransferase FtsW, found in Marinobacter nauticus (strain ATCC 700491 / DSM 11845 / VT8) (Marinobacter aquaeolei).